We begin with the raw amino-acid sequence, 152 residues long: Large ribosomal subunit protein bL9 (152 aa).

It belongs to the bacterial ribosomal protein bL9 family.

In terms of biological role, binds to the 23S rRNA. This is Large ribosomal subunit protein bL9 from Mycobacterium bovis (strain ATCC BAA-935 / AF2122/97).